The following is a 708-amino-acid chain: Polyribonucleotide nucleotidyltransferase (708 aa).

Positions 485 and 491 each coordinate Mg(2+). One can recognise a KH domain in the interval 552-611 (PKTYIMSIPPDKIRDVIGSGGKVINKIIAETGVKIDIKEDGKIFVMSEDSEGAKKALKII). The region spanning 621–689 (GEIYLGKVTK…NQGRINLSRK (69 aa)) is the S1 motif domain. Residues 689–708 (KDAIKDSEKKEQNEKDVQKK) are disordered.

The protein belongs to the polyribonucleotide nucleotidyltransferase family. Requires Mg(2+) as cofactor.

Its subcellular location is the cytoplasm. The enzyme catalyses RNA(n+1) + phosphate = RNA(n) + a ribonucleoside 5'-diphosphate. Its function is as follows. Involved in mRNA degradation. Catalyzes the phosphorolysis of single-stranded polyribonucleotides processively in the 3'- to 5'-direction. In Clostridium kluyveri (strain NBRC 12016), this protein is Polyribonucleotide nucleotidyltransferase.